The following is a 379-amino-acid chain: Putative nucleosome assembly protein C2D10.11C (379 aa).

A compositionally biased stretch (basic and acidic residues) spans 1 to 10 (MSKGPGDFKK). Disordered stretches follow at residues 1-30 (MSKG…DVHL) and 345-379 (SDFN…EISD). Residues 16 to 28 (AAQTPQNTPSSDV) show a composition bias toward polar residues.

This sequence belongs to the nucleosome assembly protein (NAP) family.

The protein localises to the nucleus. The protein is Putative nucleosome assembly protein C2D10.11C of Schizosaccharomyces pombe (strain 972 / ATCC 24843) (Fission yeast).